Reading from the N-terminus, the 468-residue chain is Ribulose bisphosphate carboxylase large chain (468 aa).

Lysine 7 is modified (N6,N6,N6-trimethyllysine). The substrate site is built by asparagine 116 and threonine 166. Lysine 168 (proton acceptor) is an active-site residue. Lysine 170 is a binding site for substrate. 3 residues coordinate Mg(2+): lysine 194, aspartate 196, and glutamate 197. At lysine 194 the chain carries N6-carboxylysine. Histidine 287 (proton acceptor) is an active-site residue. Positions 288, 320, and 372 each coordinate substrate.

The protein belongs to the RuBisCO large chain family. Type I subfamily. In terms of assembly, heterohexadecamer of 8 large chains and 8 small chains. Requires Mg(2+) as cofactor.

It localises to the plastid. Its subcellular location is the chloroplast. It catalyses the reaction 2 (2R)-3-phosphoglycerate + 2 H(+) = D-ribulose 1,5-bisphosphate + CO2 + H2O. The enzyme catalyses D-ribulose 1,5-bisphosphate + O2 = 2-phosphoglycolate + (2R)-3-phosphoglycerate + 2 H(+). In terms of biological role, ruBisCO catalyzes two reactions: the carboxylation of D-ribulose 1,5-bisphosphate, the primary event in carbon dioxide fixation, as well as the oxidative fragmentation of the pentose substrate in the photorespiration process. Both reactions occur simultaneously and in competition at the same active site. In Couroupita guianensis (Cannonball tree), this protein is Ribulose bisphosphate carboxylase large chain.